Consider the following 382-residue polypeptide: Saccharopine dehydrogenase [NAD(+), L-lysine-forming] (382 aa).

The L-saccharopine site is built by arginine 20 and lysine 79. Catalysis depends on lysine 79, which acts as the Proton acceptor. Histidine 98 acts as the Proton donor in catalysis. Glutamine 103 provides a ligand contact to L-saccharopine. Residue arginine 132 coordinates NAD(+). Residues arginine 133 and phenylalanine 137 each coordinate L-saccharopine. Residues 215–216, aspartate 239, threonine 243, tyrosine 263, and valine 290 each bind NAD(+); that span reads GR. A disulfide bond links cysteine 217 and cysteine 261. 291 to 293 is an L-saccharopine binding site; it reads SAD. 330 to 333 provides a ligand contact to NAD(+); it reads IDHL.

This sequence belongs to the AlaDH/PNT family. In terms of assembly, monomer.

It carries out the reaction L-saccharopine + NAD(+) + H2O = L-lysine + 2-oxoglutarate + NADH + H(+). Its pathway is amino-acid biosynthesis; L-lysine biosynthesis via AAA pathway; L-lysine from L-alpha-aminoadipate (fungal route): step 3/3. Its function is as follows. Catalyzes the NAD(+)-dependent cleavage of saccharopine to L-lysine and 2-oxoglutarate, the final step in the alpha-aminoadipate (AAA) pathway for lysin biosynthesis. This Candida albicans (strain SC5314 / ATCC MYA-2876) (Yeast) protein is Saccharopine dehydrogenase [NAD(+), L-lysine-forming].